A 314-amino-acid chain; its full sequence is Olfactory receptor 1 (314 aa).

At 1 to 29 (MTERNQTVISQFLLLGLPIPPEHQHVFYA) the chain is on the extracellular side. The N-linked (GlcNAc...) asparagine glycan is linked to asparagine 5. A helical transmembrane segment spans residues 30-50 (LFLSMYLTTVLGNLIIIILIL). Residues 51-59 (LDSHLHTPM) are Cytoplasmic-facing. Residues 60-81 (YLFLSNLSFSDLCFSSVTMPKL) traverse the membrane as a helical segment. The Extracellular portion of the chain corresponds to 82–97 (LQNMQSQVPSIPYAGC). Cysteine 97 and cysteine 179 form a disulfide bridge. A helical membrane pass occupies residues 98–118 (LSQIYFFLFFGDLGNFLLVAM). Residues 119 to 143 (AYDRYVAICFPLHYMSIMSPKLCVS) are Cytoplasmic-facing. The chain crosses the membrane as a helical span at residues 144 to 164 (LVVLSWVLTTFHAMLHTLLMA). Residues 165 to 196 (RLSFCEDNVIPHFFCDMSALLKLACSDTRVNE) lie on the Extracellular side of the membrane. Residues 197 to 217 (VVIFIVVSLFLVLPFALIIMS) traverse the membrane as a helical segment. At 218–240 (YVRIVSSILKVPSSQGIYKAFST) the chain is on the cytoplasmic side. A helical transmembrane segment spans residues 241-261 (CGSHLSVVSLFYGTVIGLYLC). Residues 262–271 (PSSNNSTVKE) lie on the Extracellular side of the membrane. Asparagine 265 and asparagine 266 each carry an N-linked (GlcNAc...) asparagine glycan. The chain crosses the membrane as a helical span at residues 272 to 292 (TVMSLMYTVVTPMLNPFIYSL). Residues 293-314 (RNRDIKGAMERIFCKRKIQLNL) lie on the Cytoplasmic side of the membrane.

Belongs to the G-protein coupled receptor 1 family. Olfactory epithelium.

It localises to the cell membrane. In terms of biological role, odorant receptor. Activated by a lily-derived aldehyde as well as other odorants. May signal through an inositol 1,4,5-trisphosphate (IP3) second messenger system. The sequence is that of Olfactory receptor 1 from Rattus norvegicus (Rat).